Reading from the N-terminus, the 773-residue chain is Serine/threonine-protein kinase CBK1 (773 aa).

Composition is skewed to polar residues over residues Leu-50 to Glu-59 and Gly-178 to Arg-217. 2 disordered regions span residues Leu-50–Ile-111 and Asn-177–Gln-275. Composition is skewed to low complexity over residues Gln-218–Pro-256 and Gln-265–Gln-275. The 317-residue stretch at Phe-370–Phe-686 folds into the Protein kinase domain. Residues Ile-376–Val-384 and Lys-399 each bind ATP. Residue Asp-493 is the Proton acceptor of the active site. The region spanning Arg-687–Asn-771 is the AGC-kinase C-terminal domain.

This sequence belongs to the protein kinase superfamily. STE Ser/Thr protein kinase family. COT1 subfamily.

It catalyses the reaction L-seryl-[protein] + ATP = O-phospho-L-seryl-[protein] + ADP + H(+). It carries out the reaction L-threonyl-[protein] + ATP = O-phospho-L-threonyl-[protein] + ADP + H(+). Its function is as follows. Protein kinase that seems to play a role in the regulation of cell morphogenesis and proliferation. The polypeptide is Serine/threonine-protein kinase CBK1 (CBK1) (Candida glabrata (strain ATCC 2001 / BCRC 20586 / JCM 3761 / NBRC 0622 / NRRL Y-65 / CBS 138) (Yeast)).